The chain runs to 93 residues: Large ribosomal subunit protein uL23cz/uL23cy (93 aa).

The protein belongs to the universal ribosomal protein uL23 family. As to quaternary structure, part of the 50S ribosomal subunit.

It localises to the plastid. The protein resides in the chloroplast. Functionally, binds to 23S rRNA. This Cucumis sativus (Cucumber) protein is Large ribosomal subunit protein uL23cz/uL23cy (rpl23-A).